The chain runs to 392 residues: CD2 homolog (392 aa).

The N-terminal stretch at 1–16 (MIIKLIFLICFKIVLS) is a signal peptide. Residues 17-222 (IDNKTKFNET…YLDFFQVTSY (206 aa)) lie on the Extracellular side of the membrane. Asn-39, Asn-88, Asn-92, Asn-106, Asn-148, Asn-159, Asn-183, Asn-191, Asn-198, and Asn-204 each carry an N-linked (GlcNAc...) asparagine; by host glycan. 2 disulfide bridges follow: Cys-137–Cys-205 and Cys-144–Cys-188. A helical transmembrane segment spans residues 223–243 (IFYMIIFIVTGITVSILISII). Topologically, residues 244–392 (TFLFIRKRKH…ISLIHVDRII (149 aa)) are cytoplasmic. The interval 258 to 290 (ESPPPESNEEEQQCHHDTTSIHEPSPREPLLPK) is disordered. Positions 269–283 (QQCHHDTTSIHEPSP) are enriched in basic and acidic residues. 5 tandem repeats follow at residues 319-324 (KPCPPP), 325-330 (KPCPPP), 331-336 (KPCPPP), 337-342 (KPCPPS), and 343-348 (KPCPPP). The segment at 319–348 (KPCPPPKPCPPPKPCPPPKPCPPSKPCPPP) is 5 X 6 AA tandem repeats of K-P-C-[PRS]-[P]-[PS]. A disordered region spans residues 328–357 (PPPKPCPPPKPCPPSKPCPPPEPYSPPKPC).

It belongs to the asfivirus CD2 homolog protein family. In terms of assembly, both glycosylated and nonglycosylated forms interact (via C-terminus) with the host AP-1 complex. In terms of processing, cleaved into two fragments of 63 kDa and 26 kDa containing respectively the glycosylated N-terminus and the nonglycosylated C-terminus. A full-length 89-kDa glycosylated form also exists.

It is found in the host cell membrane. The protein localises to the virion membrane. Its subcellular location is the host Golgi apparatus. May play an immunosuppressive role by inhibiting lymphocyte proliferation and subsequently facilitating viral replication and generalization of infection. Responsible for viral hemadsorption, which may help viral spread. Increases virus replication in the tick vector at the step of virus uptake or replication in the tick gut. May play a role in the host Golgi reorganization to yield viral factories. May play a role in host cell penetration. The polypeptide is CD2 homolog (Ornithodoros (relapsing fever ticks)).